Consider the following 675-residue polypeptide: Methionine--tRNA ligase (675 aa).

The 'HIGH' region signature appears at 15-25 (PYANGPIHLGH). 4 residues coordinate Zn(2+): Cys146, Cys149, Cys159, and Cys162. A 'KMSKS' region motif is present at residues 332-336 (KMSKS). Lys335 serves as a coordination point for ATP. Residues 573-675 (DFAKVDMRVA…SGAQPGMQVK (103 aa)) enclose the tRNA-binding domain.

This sequence belongs to the class-I aminoacyl-tRNA synthetase family. MetG type 1 subfamily. As to quaternary structure, homodimer. Zn(2+) serves as cofactor.

The protein resides in the cytoplasm. The enzyme catalyses tRNA(Met) + L-methionine + ATP = L-methionyl-tRNA(Met) + AMP + diphosphate. Its function is as follows. Is required not only for elongation of protein synthesis but also for the initiation of all mRNA translation through initiator tRNA(fMet) aminoacylation. This chain is Methionine--tRNA ligase, found in Photorhabdus laumondii subsp. laumondii (strain DSM 15139 / CIP 105565 / TT01) (Photorhabdus luminescens subsp. laumondii).